A 209-amino-acid chain; its full sequence is Protein TIC 20-v, chloroplastic (209 aa).

The transit peptide at 1-49 (MAIISQFFAPLPSLTGTLTLTGRSFLPLNLDTQFPKPRLSRDRAATLVL) directs the protein to the chloroplast. The next 4 helical transmembrane spans lie at 63 to 83 (IISAVCYFYPFFDGIQYGKFI), 103 to 123 (AFKSFPFNGFLIFITLYFVVV), 132 to 152 (VRFNTMQAIVLDVLLIFPDLL), and 173 to 193 (TVFLFLLVSLIYGFSACLFGL).

It belongs to the Tic20 family. In terms of assembly, part of the Tic complex. Expressed in leaves, siliques and roots.

The protein resides in the plastid. The protein localises to the chloroplast inner membrane. Its function is as follows. May be involved in protein precursor import into chloroplasts. Not redundant with TIC20-I, TIC20-II or TIC20-IV. This chain is Protein TIC 20-v, chloroplastic (TIC20-V), found in Arabidopsis thaliana (Mouse-ear cress).